Here is a 281-residue protein sequence, read N- to C-terminus: Polyamine aminopropyltransferase (281 aa).

The 235-residue stretch at 2-236 (DLWLKEGQIS…GYWSFTIGSK (235 aa)) folds into the PABS domain. Residue Q31 participates in S-methyl-5'-thioadenosine binding. Spermidine is bound by residues H62 and D86. S-methyl-5'-thioadenosine-binding positions include E106 and 138–139 (DG). Catalysis depends on D156, which acts as the Proton acceptor. Residue 156 to 159 (DSTD) coordinates spermidine.

Belongs to the spermidine/spermine synthase family. As to quaternary structure, homodimer or homotetramer.

It localises to the cytoplasm. The catalysed reaction is S-adenosyl 3-(methylsulfanyl)propylamine + putrescine = S-methyl-5'-thioadenosine + spermidine + H(+). It functions in the pathway amine and polyamine biosynthesis; spermidine biosynthesis; spermidine from putrescine: step 1/1. Catalyzes the irreversible transfer of a propylamine group from the amino donor S-adenosylmethioninamine (decarboxy-AdoMet) to putrescine (1,4-diaminobutane) to yield spermidine. This chain is Polyamine aminopropyltransferase, found in Clostridium tetani (strain Massachusetts / E88).